Here is a 139-residue protein sequence, read N- to C-terminus: MKLIILLCLVASSYALIGNTQSAGVRGKLICNGKPAVGVLVKLYDDDRGIDADDLMASGKTNGNGDFEISGHEDEVTPIDPKLNIYHDCNDGIKPCQRKFTIKIPDSYINKGKTVRNIYDAGVIQLAGSFPGEGRDCLH.

Positions 1–15 (MKLIILLCLVASSYA) are cleaved as a signal peptide.

Belongs to the nematode transthyretin-like family.

It localises to the secreted. The sequence is that of Transthyretin-like protein 5 (ttr-5) from Caenorhabditis elegans.